Here is a 747-residue protein sequence, read N- to C-terminus: Photosystem I P700 chlorophyll a apoprotein A2 (747 aa).

8 helical membrane passes run 46-69, 135-158, 175-199, 273-291, 341-364, 380-406, 428-450, and 530-548; these read LFATHFGHLAIIGLWVAGNLFHIA, LFQGAIFLNILVCWLLFAGWLHLQ, LNHHLAVLFGFSSIAWTGHLVHVAI, IAHHHLAIGVMFIIAGHMY, LHFQLGLALASLGAACSLVAQHMG, SALYTHHQYIAMFLMVGAFSHGAIFFV, ALISHLSWVTMLLGFHTLGIYVH, and FLVHHAIALGLHTTALILI. Residues C572 and C581 each coordinate [4Fe-4S] cluster. 2 helical membrane passes run 588-609 and 656-678; these read ATYLAMFWALNTIAWITFYWHW and LSPWAWMFLFGHLIWATGFMFLI. Positions 667, 675, and 683 each coordinate divinyl chlorophyll a. Residue W684 participates in phylloquinone binding. A helical membrane pass occupies residues 720–740; it reads LVGLTHFTVGNFVTFGAFVIA.

The protein belongs to the PsaA/PsaB family. The PsaA/B heterodimer binds the P700 divinyl chlorophyll special pair and subsequent electron acceptors. PSI consists of a core antenna complex that captures photons, and an electron transfer chain that converts photonic excitation into a charge separation. The cyanobacterial PSI reaction center is composed of one copy each of PsaA,B,C,D,E,F,I,J,K,L,M and X, and forms trimeric complexes. It depends on PSI electron transfer chain: 5 divinyl chlorophyll a, 1 divinyl chlorophyll a', 2 phylloquinones and 3 4Fe-4S clusters. PSI core antenna: 90 divinyl chlorophyll a, 22 carotenoids, 3 phospholipids and 1 galactolipid. P700 is a divinyl chlorophyll a/divinyl chlorophyll a' dimer, A0 is one or more divinyl chlorophyll a, A1 is one or both phylloquinones and FX is a shared 4Fe-4S iron-sulfur center. as a cofactor.

It localises to the cellular thylakoid membrane. It carries out the reaction reduced [plastocyanin] + hnu + oxidized [2Fe-2S]-[ferredoxin] = oxidized [plastocyanin] + reduced [2Fe-2S]-[ferredoxin]. Functionally, psaA and PsaB bind P700, the primary electron donor of photosystem I (PSI), as well as the electron acceptors A0, A1 and FX. PSI is a plastocyanin/cytochrome c6-ferredoxin oxidoreductase, converting photonic excitation into a charge separation, which transfers an electron from the donor P700 chlorophyll pair to the spectroscopically characterized acceptors A0, A1, FX, FA and FB in turn. Oxidized P700 is reduced on the lumenal side of the thylakoid membrane by plastocyanin or cytochrome c6. The polypeptide is Photosystem I P700 chlorophyll a apoprotein A2 (Prochlorococcus marinus (strain SARG / CCMP1375 / SS120)).